The following is a 177-amino-acid chain: ATP synthase subunit delta (177 aa).

Belongs to the ATPase delta chain family. F-type ATPases have 2 components, F(1) - the catalytic core - and F(0) - the membrane proton channel. F(1) has five subunits: alpha(3), beta(3), gamma(1), delta(1), epsilon(1). F(0) has three main subunits: a(1), b(2) and c(10-14). The alpha and beta chains form an alternating ring which encloses part of the gamma chain. F(1) is attached to F(0) by a central stalk formed by the gamma and epsilon chains, while a peripheral stalk is formed by the delta and b chains.

The protein resides in the cell inner membrane. Its function is as follows. F(1)F(0) ATP synthase produces ATP from ADP in the presence of a proton or sodium gradient. F-type ATPases consist of two structural domains, F(1) containing the extramembraneous catalytic core and F(0) containing the membrane proton channel, linked together by a central stalk and a peripheral stalk. During catalysis, ATP synthesis in the catalytic domain of F(1) is coupled via a rotary mechanism of the central stalk subunits to proton translocation. Functionally, this protein is part of the stalk that links CF(0) to CF(1). It either transmits conformational changes from CF(0) to CF(1) or is implicated in proton conduction. The sequence is that of ATP synthase subunit delta from Salmonella agona (strain SL483).